Reading from the N-terminus, the 191-residue chain is Thymidylate kinase (191 aa).

7 to 14 (GIDTAGKS) is a binding site for ATP.

It belongs to the thymidylate kinase family.

It catalyses the reaction dTMP + ATP = dTDP + ADP. In terms of biological role, phosphorylation of dTMP to form dTDP in both de novo and salvage pathways of dTTP synthesis. The sequence is that of Thymidylate kinase from Sulfurimonas denitrificans (strain ATCC 33889 / DSM 1251) (Thiomicrospira denitrificans (strain ATCC 33889 / DSM 1251)).